We begin with the raw amino-acid sequence, 758 residues long: Probable C-mannosyltransferase DPY19L2 (758 aa).

The interval 1-58 is disordered; it reads MRKQGVSSKRLQSSGRSQSKGRRGASLAREPEVEEEMEKSALGGGKLPRGSWRSSPGR. At 1–107 the chain is on the nuclear side; that stretch reads MRKQGVSSKR…ELQARRFSSR (107 aa). Residues 7-18 show a composition bias toward low complexity; it reads SSKRLQSSGRSQ. The helical transmembrane segment at 108-128 threads the bilayer; sequence TTLGIAVFVAILHWLHLVTLF. The Perinuclear space portion of the chain corresponds to 129–194; sequence ENDRHFSHLS…INAIKRFHLY (66 aa). A helical membrane pass occupies residues 195 to 215; it reads PEVIIASWYCTFMGIMNLFGL. Residues 216 to 241 are Nuclear-facing; sequence ETKTCWNVTRIEPLNEVQSCEGLGDP. Transmembrane regions (helical) follow at residues 242–262 and 263–283; these read ACFYVGVIFILNGLMMGLFFM and YGAYLSGTQLGGLITVLCFFF. At 284 to 296 the chain is on the nuclear side; that stretch reads NHGEATRVMWTPP. The helical transmembrane segment at 297–317 threads the bilayer; that stretch reads LRESFSYPFLVLQMCILTLIL. Residues 318-343 are Perinuclear space-facing; it reads RTSSNDRRPFIALCLSNVAFMLPWQF. A helical membrane pass occupies residues 344–364; it reads AQFILFTQIASLFPMYVVGYI. Over 365 to 371 the chain is Nuclear; sequence EPSKFQK. The chain crosses the membrane as a helical span at residues 372-392; that stretch reads IIYMNMISVTLSFILMFGNSM. Residues 393-422 are Perinuclear space-facing; that stretch reads YLSSYYSSSLLMTWAIILKRNEIQKLGVSK. A helical transmembrane segment spans residues 423 to 443; that stretch reads LNFWLIQGSAWWCGTIILKFL. Residues 444–488 are Nuclear-facing; the sequence is TSKILGVSDHIRLSDLIAARILRYTDFDTLIYTCAPEFDFMEKAT. Residues 489-509 traverse the membrane as a helical segment; that stretch reads PLRYTKTLLLPVVMVITCFIF. The Perinuclear space portion of the chain corresponds to 510–533; it reads KKTVRDISYVLATNIYLRKQLLEH. A helical transmembrane segment spans residues 534–554; it reads SELAFHTLQLLVFTALAILIM. At 555 to 758 the chain is on the nuclear side; it reads RLKMFLTPHM…NSVYRVLKVN (204 aa).

It belongs to the dpy-19 family. As to quaternary structure, interacts with FAM209. As to expression, widely expressed with high expression in testis. Not detectable in ejaculated sperm (at protein level).

The protein resides in the nucleus inner membrane. Functionally, probable C-mannosyltransferase that mediates C-mannosylation of tryptophan residues on target proteins. In terms of biological role, required during spermatogenesis for sperm head elongation and acrosome formation. Also plays a role in acrosome attachment to the nuclear envelope. The chain is Probable C-mannosyltransferase DPY19L2 from Homo sapiens (Human).